We begin with the raw amino-acid sequence, 567 residues long: MSTSVFNRRWAALLLEALTRHGVRHICIAPGSRSTPLTLAAAANPSLVCHTHFDERGLGHLALGLAKASTEPVAVIVTSGTAVANLYPALIEAGLTGERLILLTADRPPELIDCGANQAIRQQGLFASHPTLSVNLPRPTPDISARWLVSTLDSAMAQLQHGALHINCPFAEPLYGGDEQQYADWSASLGDWWQDCHPWLRQTCYPPSLYQPLAQQADWFFWRQKRGVVIAGRMGAEEGRQLTAWAAMLGWPLIGDVLSQTGQPLPCADLWLAHPRAQETLAQAQIVLQFGSSLTSKRLLQWQTACQPQEYWLVDSAPGRLDPANHRGRRIICPVGEWLSRHPAQRRTPWATELAAYSESAQAQVIETLSGQFSEAAVAHQLAELLPDNGQLFVGNSLIVRLIDALGQLPAGYPVYSNRGASGIDGLLSTAAGVQRATAKPTLAIVGDLSALYDLNALALLRQSSAPMVLLVINNNGGQIFSLLPTPEAERQRFYCMPQDVNFEHAAVMFSLGYARPNSWPQLREHVHQCWLRGGTTLIEVQVPPSQGAETLQQLVQQVTLIPQVAP.

The protein belongs to the TPP enzyme family. MenD subfamily. Homodimer. It depends on Mg(2+) as a cofactor. Mn(2+) is required as a cofactor. Requires thiamine diphosphate as cofactor.

It catalyses the reaction isochorismate + 2-oxoglutarate + H(+) = 5-enolpyruvoyl-6-hydroxy-2-succinyl-cyclohex-3-ene-1-carboxylate + CO2. It participates in quinol/quinone metabolism; 1,4-dihydroxy-2-naphthoate biosynthesis; 1,4-dihydroxy-2-naphthoate from chorismate: step 2/7. The protein operates within quinol/quinone metabolism; menaquinone biosynthesis. In terms of biological role, catalyzes the thiamine diphosphate-dependent decarboxylation of 2-oxoglutarate and the subsequent addition of the resulting succinic semialdehyde-thiamine pyrophosphate anion to isochorismate to yield 2-succinyl-5-enolpyruvyl-6-hydroxy-3-cyclohexene-1-carboxylate (SEPHCHC). The sequence is that of 2-succinyl-5-enolpyruvyl-6-hydroxy-3-cyclohexene-1-carboxylate synthase from Yersinia pseudotuberculosis serotype IB (strain PB1/+).